The primary structure comprises 968 residues: Alanine--tRNA ligase, cytoplasmic (968 aa).

Residues Arg77, His95, Trp176, and Ile214–Asn216 contribute to the ATP site. Residues Asn216 and Asp239 each coordinate L-alanine. Gly243 contacts ATP. The Zn(2+) site is built by His606, His610, Cys724, and His728.

The protein belongs to the class-II aminoacyl-tRNA synthetase family. As to quaternary structure, monomer. It depends on Zn(2+) as a cofactor.

It localises to the cytoplasm. It catalyses the reaction tRNA(Ala) + L-alanine + ATP = L-alanyl-tRNA(Ala) + AMP + diphosphate. Functionally, catalyzes the attachment of alanine to tRNA(Ala) in a two-step reaction: alanine is first activated by ATP to form Ala-AMP and then transferred to the acceptor end of tRNA(Ala). Also edits incorrectly charged tRNA(Ala) via its editing domain. The polypeptide is Alanine--tRNA ligase, cytoplasmic (Caenorhabditis elegans).